The chain runs to 200 residues: MSRVYVGNLDPRVTERELEDEFRAFGVVRSVWVARRPPGYAFLDFEDPRDARDAIRALDGKNGWRVEQSHNRGERGGGGRGGDRGGGGGGRGGRGGSDLKCYECGETGHFARECRNRGGTGRRRSKSRSRTPPRYRRSPSYGRRSYSPRARSPPPPRRRSPSPPPARGRSYSRSPPPYRAREEVPYANGNGLKERRRSRS.

Residues 2-71 (SRVYVGNLDP…NGWRVEQSHN (70 aa)) enclose the RRM domain. Positions 62-83 (NGWRVEQSHNRGERGGGGRGGD) are enriched in basic and acidic residues. 2 disordered regions span residues 62-97 (NGWR…RGGS) and 112-200 (RECR…RSRS). Gly residues predominate over residues 84-96 (RGGGGGGRGGRGG). The segment at 99 to 116 (LKCYECGETGHFARECRN) adopts a CCHC-type zinc-finger fold. Residues 120-137 (TGRRRSKSRSRTPPRYRR) show a composition bias toward basic residues. Residues S138, S147, S152, S160, S162, S174, and S200 each carry the phosphoserine modification. Low complexity predominate over residues 138-150 (SPSYGRRSYSPRA). Over residues 151-166 (RSPPPPRRRSPSPPPA) the composition is skewed to pro residues.

It belongs to the splicing factor SR family. RSZ subfamily. As to quaternary structure, component of the spliceosome. Interacts with AFC2, RS2Z33 and RNU1. In terms of processing, extensively phosphorylated on serine residues in the RS domain. Phosphorylated by AFC2. Expressed in primary and lateral roots, stems, petioles, abaxial and adaxial epidermis cells, trichomes, unopened flowers, anther filaments, anthers, stigma, pollen, pollen tube, ovule funiculi, integuments, embryo sac and developing seeds.

Its subcellular location is the nucleus speckle. It is found in the nucleus. The protein localises to the nucleolus. The protein resides in the nucleoplasm. It localises to the cytoplasm. Sequence-specific RNA-binding protein probably involved in pre-mRNA splicing. In vitro, can complement efficiently splicing-deficient mammalian SRSF7-depleted HeLa cell extract. This Arabidopsis thaliana (Mouse-ear cress) protein is Serine/arginine-rich splicing factor RSZ22 (RSZ22).